The primary structure comprises 438 residues: Transposon Ty2-B Gag polyprotein (438 aa).

Composition is skewed to polar residues over residues 1 to 11, 19 to 39, and 49 to 60; these read MESQQLHQNPH, ASVT…SASN, and KVNSQQETTPGT. Disordered stretches follow at residues 1 to 88, 364 to 397, and 419 to 438; these read MESQ…YQQH, KNVS…AKAH, and SSQY…TERI. The RNA-binding stretch occupies residues 295-397; the sequence is ENNINVSDRL…SSKPRAAKAH (103 aa). The segment covering 369 to 381 has biased composition (low complexity); sequence TSPNTTNTKVTTR.

In terms of assembly, homotrimer.

The protein resides in the cytoplasm. Functionally, capsid protein (CA) is the structural component of the virus-like particle (VLP), forming the shell that encapsulates the retrotransposons dimeric RNA genome. The particles are assembled from trimer-clustered units and there are holes in the capsid shells that allow for the diffusion of macromolecules. CA also has nucleocapsid-like chaperone activity, promoting primer tRNA(i)-Met annealing to the multipartite primer-binding site (PBS), dimerization of Ty2 RNA and initiation of reverse transcription. The polypeptide is Transposon Ty2-B Gag polyprotein (TY2A-B) (Saccharomyces cerevisiae (strain ATCC 204508 / S288c) (Baker's yeast)).